A 355-amino-acid polypeptide reads, in one-letter code: Probable cinnamyl alcohol dehydrogenase (355 aa).

Zn(2+) is bound at residue C47. NADP(+) is bound at residue S49. Zn(2+)-binding residues include H69, E70, C100, C103, C106, C114, and C162. NADP(+)-binding positions include T166, 187–192 (GLGGVG), 210–215 (SSSDKK), T250, G274, and 297–299 (SFI).

This sequence belongs to the zinc-containing alcohol dehydrogenase family. In terms of assembly, homodimer. It depends on Zn(2+) as a cofactor.

It carries out the reaction (E)-cinnamyl alcohol + NADP(+) = (E)-cinnamaldehyde + NADPH + H(+). It catalyses the reaction (E)-coniferol + NADP(+) = (E)-coniferaldehyde + NADPH + H(+). The enzyme catalyses (E)-sinapyl alcohol + NADP(+) = (E)-sinapaldehyde + NADPH + H(+). The catalysed reaction is (E)-4-coumaroyl alcohol + NADP(+) = (E)-4-coumaraldehyde + NADPH + H(+). It carries out the reaction (E)-caffeyl alcohol + NADP(+) = (E)-caffeyl aldehyde + NADPH + H(+). The protein operates within aromatic compound metabolism; phenylpropanoid biosynthesis. Functionally, involved in lignin biosynthesis. Catalyzes the final step specific for the production of lignin monomers. Catalyzes the NADPH-dependent reduction of coniferaldehyde, 5-hydroxyconiferaldehyde, sinapaldehyde, 4-coumaraldehyde and caffeyl aldehyde to their respective alcohols. The polypeptide is Probable cinnamyl alcohol dehydrogenase (CAD1) (Eucalyptus botryoides (Southern mahogany)).